We begin with the raw amino-acid sequence, 444 residues long: Phosphatidate cytidylyltransferase 2 (444 aa).

Residues 1-38 are compositionally biased toward basic and acidic residues; that stretch reads MTELRQRVVREDAPPEDKESESEAKLDGETASDSESRA. A disordered region spans residues 1-48; the sequence is MTELRQRVVREDAPPEDKESESEAKLDGETASDSESRAETAPLPTSVD. Serine 20 is subject to Phosphoserine. Threonine 30 is modified (phosphothreonine). A phosphoserine mark is found at serine 32, serine 34, and serine 36. Phosphothreonine is present on threonine 50. A run of 6 helical transmembrane segments spans residues 78-98, 129-149, 165-185, 212-232, 261-281, and 339-359; these read MIAF…MIVM, WYFL…DYFF, HRFI…LSLV, LVIH…SCVI, GFIG…YVMS, and IALS…ASGF.

Belongs to the CDS family. Homodimer. Ubiquitous. Expressed in the ganglion cell layer and inner nuclear layer of the retina.

It localises to the endoplasmic reticulum membrane. It carries out the reaction a 1,2-diacyl-sn-glycero-3-phosphate + CTP + H(+) = a CDP-1,2-diacyl-sn-glycerol + diphosphate. It catalyses the reaction 1-octadecanoyl-2-(5Z,8Z,11Z,14Z-eicosatetraenoyl)-sn-glycero-3-phosphate + CTP + H(+) = 1-octadecanoyl-2-(5Z,8Z,11Z,14Z-eicosatetraenoyl)-sn-glycero-3-cytidine-5'-diphosphate + diphosphate. The catalysed reaction is 1-octadecanoyl-2-(9Z,12Z-octadecadienoyl)-sn-glycero-3-phosphate + CTP + H(+) = 1-octadecanoyl-2-(9Z,12Z-octadecadienoyl)-sn-glycero-3-cytidine-5'-diphosphate + diphosphate. The enzyme catalyses 1-hexadecanoyl-2-(5Z,8Z,11Z,14Z-eicosatetraenoyl)-sn-glycero-3-phosphate + CTP + H(+) = 1-hexadecanoyl-2-(5Z,8Z,11Z,14Z-eicosatetraenoyl)-sn-glycero-3-cytidine-5'-diphosphate + diphosphate. It carries out the reaction 1,2-di-(5Z,8Z,11Z,14Z)-eicosatetraenoyl-sn-glycero-3-phosphate + CTP + H(+) = 1,2-di-(5Z,8Z,11Z,14Z-eicosatetraenoyl)-sn-glycero-3-cytidine-5'-diphosphate + diphosphate. It catalyses the reaction 1-octadecanoyl-2-(9Z-octadecenoyl)-sn-glycero-3-phosphate + CTP + H(+) = 1-octadecanoyl-2-(9Z-octadecenoyl)-sn-glycero-3-cytidine-5'-diphosphate + diphosphate. The catalysed reaction is 1-octadecanoyl-2-(4Z,7Z,10Z,13Z,16Z,19Z-docosahexaenoyl)-sn-glycero-3-phosphate + CTP + H(+) = 1-octadecanoyl-2-(4Z,7Z,10Z,13Z,16Z,19Z-docosahexaenoyl)-sn-glycero-3-cytidine-5'-diphosphate + diphosphate. The enzyme catalyses 1,2-di-(9Z,12Z-octadecadienoyl)-sn-glycero-3-phosphate + CTP + H(+) = 1,2-di-(9Z,12Z-octadecadienoyl)-sn-glycero-3-cytidine-5'-diphosphate + diphosphate. It carries out the reaction 1,2-di-(9Z-octadecenoyl)-sn-glycero-3-phosphate + CTP + H(+) = 1,2-di-(9Z-octadecenoyl)-sn-glycero-3-cytidine-5'-diphosphate + diphosphate. Its pathway is phospholipid metabolism; CDP-diacylglycerol biosynthesis; CDP-diacylglycerol from sn-glycerol 3-phosphate: step 3/3. Catalyzes the conversion of phosphatidic acid (PA) to CDP-diacylglycerol (CDP-DAG), an essential intermediate in the synthesis of phosphatidylglycerol, cardiolipin and phosphatidylinositol. Exhibits specificity for the nature of the acyl chains at the sn-1 and sn-2 positions in the substrate, PA and the preferred acyl chain composition is 1-stearoyl-2-arachidonoyl-sn-phosphatidic acid. Plays an important role in regulating the growth and maturation of lipid droplets which are storage organelles at the center of lipid and energy homeostasis. This chain is Phosphatidate cytidylyltransferase 2, found in Mus musculus (Mouse).